The chain runs to 396 residues: Subtelomeric hrmA-associated cluster protein AFUB_079040 (396 aa).

2 disordered regions span residues M1–L32 and Y347–R396. The segment covering S23–L32 has biased composition (polar residues). Basic residues predominate over residues S367–K380.

Its function is as follows. Part of the subtelomeric hrmA-associated cluster (HAC) containing genes that alter the hyphal surface (such as reduced total chitin or increased beta-glucan exposure) and perturb inter-hyphal interactions within the developing biofilms, resulting in a loss of vertically aligned polarized growing filaments. Consequently, this hypoxia-typic morphotype (called H-MORPH) with altered biofilm architecture leads to increased hypoxia fitness, increased host inflammation, rapid disease progression, and mortality in a murine model of invasive aspergillosis. The chain is Subtelomeric hrmA-associated cluster protein AFUB_079040 from Aspergillus fumigatus (strain CBS 144.89 / FGSC A1163 / CEA10) (Neosartorya fumigata).